Reading from the N-terminus, the 279-residue chain is NH(3)-dependent NAD(+) synthetase (279 aa).

Residue 46–53 coordinates ATP; that stretch reads GISGGQDS. D52 contacts Mg(2+). Deamido-NAD(+) is bound at residue R145. T165 serves as a coordination point for ATP. Residue E170 participates in Mg(2+) binding. Deamido-NAD(+) is bound by residues K178 and D185. Positions 194 and 216 each coordinate ATP. 265–266 lines the deamido-NAD(+) pocket; sequence HK.

It belongs to the NAD synthetase family. Homodimer.

The enzyme catalyses deamido-NAD(+) + NH4(+) + ATP = AMP + diphosphate + NAD(+) + H(+). Its pathway is cofactor biosynthesis; NAD(+) biosynthesis; NAD(+) from deamido-NAD(+) (ammonia route): step 1/1. Functionally, catalyzes the ATP-dependent amidation of deamido-NAD to form NAD. Uses ammonia as a nitrogen source. The polypeptide is NH(3)-dependent NAD(+) synthetase (Rhodococcus opacus (strain B4)).